We begin with the raw amino-acid sequence, 662 residues long: Methyl-accepting chemotaxis protein TlpB (662 aa).

The Cytoplasmic portion of the chain corresponds to 1-16; sequence MGKFIQWIKQPSISKP. Residues 17–37 form a helical membrane-spanning segment; the sequence is LIAAFLAVLILPVGVLAYFSY. The Extracellular portion of the chain corresponds to 38–281; sequence QSAWNALDRE…LQDASSPVLN (244 aa). The region spanning 153-228 is the Cache domain; it reads SEPYTDEATG…KPGTTGSGDW (76 aa). Residues 282–302 form a helical membrane-spanning segment; that stretch reads TAVIILCVSIVIGGILILYII. In terms of domain architecture, HAMP spans 303 to 355; that stretch reads RAITKPLRKLVSTSAKISSGDLTEVIDIHSKNEFGQLGESFNEMSASLRSVIG. Over 303–662 the chain is Cytoplasmic; sequence RAITKPLRKL…DITKKFKIES (360 aa). E370 is modified (glutamate methyl ester (Glu)). One can recognise a Methyl-accepting transducer domain in the interval 374–610; it reads SAAQTSKATE…EVSSAVEDIS (237 aa). Q594 is subject to Glutamate methyl ester (Gln). Residues E629 and E636 each carry the glutamate methyl ester (Glu) modification.

The protein belongs to the methyl-accepting chemotaxis (MCP) protein family.

The protein localises to the cell membrane. Functionally, chemotactic-signal transducers respond to changes in the concentration of attractants and repellents in the environment, transduce a signal from the outside to the inside of the cell, and facilitate sensory adaptation through the variation of the level of methylation. All amino acids serve as attractants in B.subtilis, they appear to cause an increase in the turnover methyl groups, leading to methylation of an unidentified acceptor, while repellents have been shown to cause a decrease in methyl group turnover. The methyl groups are added by a methyltransferase and removed by a methylesterase. This is Methyl-accepting chemotaxis protein TlpB (tlpB) from Bacillus subtilis (strain 168).